Here is a 132-residue protein sequence, read N- to C-terminus: Small ribosomal subunit protein uS8 (132 aa).

The protein belongs to the universal ribosomal protein uS8 family. As to quaternary structure, part of the 30S ribosomal subunit. Contacts proteins S5 and S12.

Its function is as follows. One of the primary rRNA binding proteins, it binds directly to 16S rRNA central domain where it helps coordinate assembly of the platform of the 30S subunit. This chain is Small ribosomal subunit protein uS8, found in Clostridium botulinum (strain 657 / Type Ba4).